Consider the following 783-residue polypeptide: MGYDNVCGERQTLLVVANRLPASAKRTGEHSWSLEMSPGGKFNLLVEKDAVSKSLAEMKCIPVFLNEVFDQYYNGYSNGILWPILHHMGLPQEYDHDTIKTFETQYDAYKKANRMFLDVIKENYKDGDIVWCQDYHLMFLPQYLKEYNNKIKVGWFLHSPFPSSEIYKTLPSRSELLRSVLAADLISFHTYDFARHFVNTCTRILGVEGTHEGVVYQGRVTRVVVLPMGIYPNRFIKTCKLPEVIQQMNELKDRFSGKKVILGVDRLDMIKGIPQKYLGFEKFLDENPNWRDKIVLVQIAVPTRNEVPEYQKLKNQVHRLVGRINGRFGSVSSLPIHHMDCSVDSNYLCALYAISDVMLVTSLRDGLNLVSHEFVACQEAKRGVLILSEFAGAGQSLGAGALLVNPWNVTEVSSAIKKALNMPYEERETRHRVNFKYVKTHSAEKWGFDFLSELNDAFDESELQIRKIPHELPQQDVIQRYSLSNNRLIILGFYGTITEPRNSLSKEMDLKLNPELKETLKALCNDPKTTVVVLSRSGKNILDKNFGEYKIWLAAENGMFLKHTTEEWVTNMPQNMNLDWVDGLKNVFKYFTDRTPRSFFEASKTSLVWNYEYADVEFGRAQARDLLQYLWAGPISNASAEVVRGKYSVEVHAIGVTKEPEIGHILGEIVHKKAMTTPIDYVFCSGYFLEKDEDIYTFFESEILSPKLSHETRSKSSSSNHSLEKKVSLNVLDLKQENYFSTAIGQARTKARYVVDSSHNVVNLLHKLAVANTTTTSVKKPNV.

The segment at Gln-11–Asp-456 is glycosyltransferase.

This sequence in the N-terminal section; belongs to the glycosyltransferase 20 family. In the C-terminal section; belongs to the trehalose phosphatase family.

The catalysed reaction is D-glucose 6-phosphate + UDP-alpha-D-glucose = alpha,alpha-trehalose 6-phosphate + UDP + H(+). In Arabidopsis thaliana (Mouse-ear cress), this protein is Probable alpha,alpha-trehalose-phosphate synthase [UDP-forming] 3 (TPS3).